Consider the following 322-residue polypeptide: Mas-related G-protein coupled receptor member X1 (322 aa).

At 1–31 the chain is on the extracellular side; sequence MDPTISTLDTELTPINGTEETLCYKQTLSLT. A glycan (N-linked (GlcNAc...) asparagine) is linked at Asn-16. A helical transmembrane segment spans residues 32-52; the sequence is VLTCIVSLVGLTGNAVVLWLL. Over 53 to 67 the chain is Cytoplasmic; it reads GCRMRRNAFSIYILN. Residues 68–88 traverse the membrane as a helical segment; that stretch reads LAAADFLFLSGRLIYSLLSFI. Residues 89 to 96 lie on the Extracellular side of the membrane; it reads SIPHTISK. A helical membrane pass occupies residues 97-117; that stretch reads ILYPVMMFSYFAGLSFLSAVS. Residues 118–144 are Cytoplasmic-facing; sequence TERCLSVLWPIWYRCHRPTHLSAVVCV. A helical transmembrane segment spans residues 145–165; it reads LLWALSLLRSILEWMLCGFLF. Topologically, residues 166–177 are extracellular; the sequence is SGADSAWCQTSD. A helical membrane pass occupies residues 178–198; the sequence is FITVAWLIFLCVVLCGSSLVL. Residues 199–221 are Cytoplasmic-facing; sequence LIRILCGSRKIPLTRLYVTILLT. A helical membrane pass occupies residues 222–242; it reads VLVFLLCGLPFGIQFFLFLWI. The Extracellular segment spans residues 243–254; that stretch reads HVDREVLFCHVH. Residues 255–275 traverse the membrane as a helical segment; the sequence is LVSIFLSALNSSANPIIYFFV. Residues 276-322 lie on the Cytoplasmic side of the membrane; it reads GSFRQRQNRQNLKLVLQRALQDASEVDEGGGQLPEEILELSGSRLEQ.

Belongs to the G-protein coupled receptor 1 family. Mas subfamily. Uniquely localized in a subset of small dorsal root and trigeminal sensory neurons.

The protein resides in the cell membrane. Orphan receptor. Probably involved in the function of nociceptive neurons. May regulate nociceptor function and/or development, including the sensation or modulation of pain. Potently activated by enkephalins including BAM22 (bovine adrenal medulla peptide 22) and BAM (8-22). BAM22 is the most potent compound and evoked a large and dose-dependent release of intracellular calcium in stably transfected cells. G(alpha)q proteins are involved in the calcium-signaling pathway. Activated by the antimalarial drug, chloroquine. May mediate chloroquine-induced itch, in a histamine-independent manner. The chain is Mas-related G-protein coupled receptor member X1 (MRGPRX1) from Homo sapiens (Human).